A 121-amino-acid chain; its full sequence is Large ribosomal subunit protein bL17 (121 aa).

Belongs to the bacterial ribosomal protein bL17 family. In terms of assembly, part of the 50S ribosomal subunit. Contacts protein L32.

This chain is Large ribosomal subunit protein bL17, found in Metamycoplasma arthritidis (strain 158L3-1) (Mycoplasma arthritidis).